Consider the following 448-residue polypeptide: ATP-dependent protease ATPase subunit HslU (448 aa).

ATP contacts are provided by residues V21, 63–68 (GVGKTE), D260, E326, and R398.

This sequence belongs to the ClpX chaperone family. HslU subfamily. In terms of assembly, a double ring-shaped homohexamer of HslV is capped on each side by a ring-shaped HslU homohexamer. The assembly of the HslU/HslV complex is dependent on binding of ATP.

Its subcellular location is the cytoplasm. Functionally, ATPase subunit of a proteasome-like degradation complex; this subunit has chaperone activity. The binding of ATP and its subsequent hydrolysis by HslU are essential for unfolding of protein substrates subsequently hydrolyzed by HslV. HslU recognizes the N-terminal part of its protein substrates and unfolds these before they are guided to HslV for hydrolysis. This is ATP-dependent protease ATPase subunit HslU from Sulfurihydrogenibium sp. (strain YO3AOP1).